The following is a 421-amino-acid chain: D-amino-acid oxidase (421 aa).

FAD is bound by residues Ala12, Gly13, Ala14, Val15, Gly47, Gly64, Ile65, Lys225, Ala226, Arg359, Gly385, Gly388, and Leu389. Arg359 provides a ligand contact to D-proline. Residue Arg359 coordinates D-serine.

It belongs to the DAMOX/DASOX family. FAD is required as a cofactor.

The protein localises to the cytoplasm. It is found in the secreted. Its subcellular location is the cell wall. The catalysed reaction is a D-alpha-amino acid + O2 + H2O = a 2-oxocarboxylate + H2O2 + NH4(+). Its function is as follows. Catalyzes the oxidative deamination of D-amino acids with broad substrate specificity. In Bradyrhizobium diazoefficiens (strain JCM 10833 / BCRC 13528 / IAM 13628 / NBRC 14792 / USDA 110), this protein is D-amino-acid oxidase.